Consider the following 376-residue polypeptide: Erythronate-4-phosphate dehydrogenase (376 aa).

2 residues coordinate substrate: S45 and T67. Position 147 (D147) interacts with NAD(+). Residue R209 is part of the active site. D233 provides a ligand contact to NAD(+). Residue E238 is part of the active site. Residue H255 is the Proton donor of the active site. Residue G258 participates in NAD(+) binding. Position 259 (Y259) interacts with substrate.

It belongs to the D-isomer specific 2-hydroxyacid dehydrogenase family. PdxB subfamily. In terms of assembly, homodimer.

The protein localises to the cytoplasm. It carries out the reaction 4-phospho-D-erythronate + NAD(+) = (R)-3-hydroxy-2-oxo-4-phosphooxybutanoate + NADH + H(+). The protein operates within cofactor biosynthesis; pyridoxine 5'-phosphate biosynthesis; pyridoxine 5'-phosphate from D-erythrose 4-phosphate: step 2/5. In terms of biological role, catalyzes the oxidation of erythronate-4-phosphate to 3-hydroxy-2-oxo-4-phosphonooxybutanoate. The sequence is that of Erythronate-4-phosphate dehydrogenase from Shewanella baltica (strain OS155 / ATCC BAA-1091).